The chain runs to 796 residues: DnaJ homolog subfamily C member 10 (796 aa).

The first 33 residues, 1–33 (MKHSLNTATSSSSVLKRTILYLVLISLAALVYC), serve as a signal peptide directing secretion. Residues 36–100 (DYYDLLGVSK…DLRKKYDKYG (65 aa)) form the J domain. Residues 131-233 (EIITLDRGEF…ERLVNFAMPY (103 aa)) enclose the Thioredoxin 1 domain. Cys159 and Cys162 form a disulfide bridge. 2 trxb regions span residues 236–351 (STVT…LPDL) and 349–464 (PDLE…PTNF). 3 Thioredoxin domains span residues 455-554 (HVIT…IEDL), 558-668 (SVVT…ALMY), and 672-780 (ASFD…ITKR). The cysteines at positions 481 and 484 are disulfide-linked. N-linked (GlcNAc...) asparagine glycosylation is present at Asn531. Disulfide bonds link Cys589-Cys592 and Cys701-Cys704. Asn753 carries an N-linked (GlcNAc...) asparagine glycan. The Prevents secretion from ER signature appears at 793 to 796 (KDEL).

It localises to the endoplasmic reticulum lumen. Its function is as follows. Endoplasmic reticulum disulfide reductase involved both in the correct folding of proteins and degradation of misfolded proteins. Required for efficient folding of proteins in the endoplasmic reticulum by catalyzing the removal of non-native disulfide bonds formed during the folding of proteins. Also involved in endoplasmic reticulum-associated degradation (ERAD) by reducing incorrect disulfide bonds in misfolded glycoproteins. The sequence is that of DnaJ homolog subfamily C member 10 (dnajc10) from Xenopus laevis (African clawed frog).